We begin with the raw amino-acid sequence, 481 residues long: Glutamate-1-semialdehyde 2,1-aminomutase, chloroplastic (481 aa).

The interval 18–40 (NQTPKWGFSPSHRRCNPSSSSSA) is disordered. Lys321 is modified (N6-(pyridoxal phosphate)lysine).

This sequence belongs to the class-III pyridoxal-phosphate-dependent aminotransferase family. HemL subfamily. In terms of assembly, homodimer. Pyridoxal 5'-phosphate serves as cofactor.

The protein localises to the plastid. Its subcellular location is the chloroplast. It carries out the reaction (S)-4-amino-5-oxopentanoate = 5-aminolevulinate. Its pathway is porphyrin-containing compound metabolism; protoporphyrin-IX biosynthesis; 5-aminolevulinate from L-glutamyl-tRNA(Glu): step 2/2. It functions in the pathway porphyrin-containing compound metabolism; chlorophyll biosynthesis. This Solanum lycopersicum (Tomato) protein is Glutamate-1-semialdehyde 2,1-aminomutase, chloroplastic.